Reading from the N-terminus, the 137-residue chain is Large ribosomal subunit protein eL32 (137 aa).

The disordered stretch occupies residues 95–137; sequence PSAAEIATPVSSRKRIASSPARQADRCSRSRRSKFRPRRLRAS. Basic residues predominate over residues 123–137; that stretch reads RSRRSKFRPRRLRAS.

The protein belongs to the eukaryotic ribosomal protein eL32 family.

In Trichoderma harzianum (Hypocrea lixii), this protein is Large ribosomal subunit protein eL32 (rpl32).